The following is a 432-amino-acid chain: Peptidase B (432 aa).

Residues Lys196 and Asp201 each contribute to the Mn(2+) site. Lys208 is an active-site residue. The Mn(2+) site is built by Asp219, Asp278, and Glu280. The active site involves Arg282.

Belongs to the peptidase M17 family. As to quaternary structure, homohexamer. Requires Mn(2+) as cofactor.

It localises to the cytoplasm. It carries out the reaction Release of an N-terminal amino acid, Xaa, from a peptide or arylamide. Xaa is preferably Glu or Asp but may be other amino acids, including Leu, Met, His, Cys and Gln.. Its function is as follows. Probably plays an important role in intracellular peptide degradation. The sequence is that of Peptidase B from Yersinia pseudotuberculosis serotype IB (strain PB1/+).